The following is a 117-amino-acid chain: uncharacterized protein (117 aa).

It to H.influenzae HI_1162 and to HI_0925.

This is an uncharacterized protein from Escherichia coli (strain K12).